A 181-amino-acid chain; its full sequence is Transmembrane protein 154 (181 aa).

An N-terminal signal peptide occupies residues 1–22; sequence MTVPCAALVLALGLAFGQSSQG. The tract at residues 19–47 is disordered; sequence SSQGNDEESEYSGQSITEEENSEDETTRS. Topologically, residues 23–74 are extracellular; the sequence is NDEESEYSGQSITEEENSEDETTRSALATVTTEALAENVNSTHTNDTSNQVE. Residues 75–95 form a helical membrane-spanning segment; sequence FILMVAIPLAALLILLFMVLI. At 96 to 181 the chain is on the cytoplasmic side; it reads ATYFKSKRPK…PNPSPSDNES (86 aa). The tract at residues 103–122 is disordered; sequence RPKQEPSSQGSQSALQTHEL. Residues 107–118 are compositionally biased toward polar residues; sequence EPSSQGSQSALQ. At tyrosine 160 the chain carries Phosphotyrosine. Residues 161-181 form a disordered region; sequence ECLPTLKEEKEPNPSPSDNES. Residue serine 177 is modified to Phosphoserine.

It is found in the membrane. This chain is Transmembrane protein 154 (Tmem154), found in Mus musculus (Mouse).